We begin with the raw amino-acid sequence, 152 residues long: Transcriptional repressor NrdR (152 aa).

A zinc finger spans residues 3–34 (CAFCGNPDTQVIDSRVSEDGSSIRRRRRCPAC). The 91-residue stretch at 49–139 (PQVVKTAGHR…VYRSFQDISE (91 aa)) folds into the ATP-cone domain.

Belongs to the NrdR family. The cofactor is Zn(2+).

Negatively regulates transcription of bacterial ribonucleotide reductase nrd genes and operons by binding to NrdR-boxes. In Chromobacterium violaceum (strain ATCC 12472 / DSM 30191 / JCM 1249 / CCUG 213 / NBRC 12614 / NCIMB 9131 / NCTC 9757 / MK), this protein is Transcriptional repressor NrdR.